A 338-amino-acid chain; its full sequence is Glycerol-3-phosphate dehydrogenase [NAD(P)+] (338 aa).

The NADPH site is built by S13, W14, and K108. Residues K108, G139, and S141 each coordinate sn-glycerol 3-phosphate. A143 lines the NADPH pocket. The sn-glycerol 3-phosphate site is built by K194, D247, S257, R258, and N259. K194 (proton acceptor) is an active-site residue. An NADPH-binding site is contributed by R258. NADPH-binding residues include V282 and E284.

It belongs to the NAD-dependent glycerol-3-phosphate dehydrogenase family.

It localises to the cytoplasm. It catalyses the reaction sn-glycerol 3-phosphate + NAD(+) = dihydroxyacetone phosphate + NADH + H(+). The catalysed reaction is sn-glycerol 3-phosphate + NADP(+) = dihydroxyacetone phosphate + NADPH + H(+). It functions in the pathway membrane lipid metabolism; glycerophospholipid metabolism. In terms of biological role, catalyzes the reduction of the glycolytic intermediate dihydroxyacetone phosphate (DHAP) to sn-glycerol 3-phosphate (G3P), the key precursor for phospholipid synthesis. The sequence is that of Glycerol-3-phosphate dehydrogenase [NAD(P)+] from Listeria monocytogenes serotype 4a (strain HCC23).